A 737-amino-acid chain; its full sequence is Tripartite terminase subunit 3 (737 aa).

A Nuclear localization signal motif is present at residues valine 188 to isoleucine 194. Residues valine 263–threonine 270 carry the Walker A motif motif. The short motif at leucine 357–glutamate 362 is the Walker B motif element. Glutamate 362 (for ATPase activity) is an active-site residue. Catalysis depends on for nuclease activity residues aspartate 517, glutamate 589, and aspartate 712.

Belongs to the herpesviridae TRM3 protein family. In terms of assembly, interacts with the terminase subunits TRM1 and TRM2. Interacts with portal protein.

It is found in the host nucleus. In terms of biological role, component of the molecular motor that translocates viral genomic DNA in empty capsid during DNA packaging. Forms a tripartite terminase complex together with TRM1 and TRM2 in the host cytoplasm. Once the complex reaches the host nucleus, it interacts with the capsid portal vertex. This portal forms a ring in which genomic DNA is translocated into the capsid. TRM3 carries an RNase H-like nuclease activity that plays an important role for the cleavage of concatemeric viral DNA into unit length genomes. The polypeptide is Tripartite terminase subunit 3 (Gallus gallus (Chicken)).